A 167-amino-acid chain; its full sequence is S-ribosylhomocysteine lyase (167 aa).

Fe cation is bound by residues H54, H58, and C128.

It belongs to the LuxS family. Homodimer. Fe cation is required as a cofactor.

It carries out the reaction S-(5-deoxy-D-ribos-5-yl)-L-homocysteine = (S)-4,5-dihydroxypentane-2,3-dione + L-homocysteine. Its function is as follows. Involved in the synthesis of autoinducer 2 (AI-2) which is secreted by bacteria and is used to communicate both the cell density and the metabolic potential of the environment. The regulation of gene expression in response to changes in cell density is called quorum sensing. Catalyzes the transformation of S-ribosylhomocysteine (RHC) to homocysteine (HC) and 4,5-dihydroxy-2,3-pentadione (DPD). The polypeptide is S-ribosylhomocysteine lyase (Haemophilus influenzae (strain PittEE)).